Reading from the N-terminus, the 273-residue chain is uncharacterized protein (273 aa).

This is an uncharacterized protein from Acanthamoeba polyphaga (Amoeba).